A 192-amino-acid polypeptide reads, in one-letter code: uncharacterized protein (192 aa).

Residues 29-160 enclose the Nudix hydrolase domain; the sequence is HRQAAVLIPI…PLDIYRRGDS (132 aa). Residues 67 to 89 carry the Nudix box motif; that stretch reads GAVDDTDASAIAAALREAEEEVA. The Mg(2+) site is built by glutamate 83 and glutamate 87.

It belongs to the Nudix hydrolase family. PCD1 subfamily. Mn(2+) is required as a cofactor. Mg(2+) serves as cofactor.

Its function is as follows. Probably mediates the hydrolysis of some nucleoside diphosphate derivatives. This is an uncharacterized protein from Escherichia coli (strain K12).